The following is a 446-amino-acid chain: Iron-sulfur cluster assembly SufBD family protein PH1385 (446 aa).

The protein belongs to the iron-sulfur cluster assembly SufBD family.

This Pyrococcus horikoshii (strain ATCC 700860 / DSM 12428 / JCM 9974 / NBRC 100139 / OT-3) protein is Iron-sulfur cluster assembly SufBD family protein PH1385.